The primary structure comprises 363 residues: Eukaryotic translation initiation factor 3 subunit H (363 aa).

In terms of domain architecture, MPN spans 13-163 (VQVEALVVMK…LRAFRLSTAF (151 aa)).

Belongs to the eIF-3 subunit H family. Component of the eukaryotic translation initiation factor 3 (eIF-3) complex.

The protein resides in the cytoplasm. Component of the eukaryotic translation initiation factor 3 (eIF-3) complex, which is involved in protein synthesis of a specialized repertoire of mRNAs and, together with other initiation factors, stimulates binding of mRNA and methionyl-tRNAi to the 40S ribosome. The eIF-3 complex specifically targets and initiates translation of a subset of mRNAs involved in cell proliferation. The protein is Eukaryotic translation initiation factor 3 subunit H of Pyricularia oryzae (strain 70-15 / ATCC MYA-4617 / FGSC 8958) (Rice blast fungus).